The chain runs to 320 residues: Apolipoprotein E (320 aa).

A signal peptide spans M1–G18. 8 tandem repeats follow at residues A82–S103, P104–G125, A126–G147, Q148–L169, R170–E191, R192–A213, T214–R236, and A237–E258. The segment at A82–E258 is 8 X 22 AA approximate tandem repeats. M145 carries the methionine sulfoxide modification. S149 bears the Phosphoserine mark. The segment at H160–R170 is LDL and other lipoprotein receptors binding. L164–R167 serves as a coordination point for heparin. The tract at residues A212 to M293 is lipid-binding and lipoprotein association. The O-linked (GalNAc...) threonine glycan is linked to T214. Residue G232–M239 coordinates heparin. Residues Q269–H320 form a homooligomerization region. The interval R281–M293 is specificity for association with VLDL.

Belongs to the apolipoprotein A1/A4/E family. In terms of assembly, homotetramer. May interact with ABCA1; functionally associated with ABCA1 in the biogenesis of HDLs. May interact with APP/A4 amyloid-beta peptide; the interaction is extremely stable in vitro but its physiological significance is unclear. May interact with MAPT. May interact with MAP2. In the cerebrospinal fluid, interacts with secreted SORL1. Interacts with PMEL; this allows the loading of PMEL luminal fragment on ILVs to induce fibril nucleation. APOE exists as multiple glycosylated and sialylated glycoforms within cells and in plasma. The extent of glycosylation and sialylation are tissue and context specific. Post-translationally, glycated in plasma VLDL. In terms of processing, phosphorylated by FAM20C in the extracellular medium.

The protein localises to the secreted. Its subcellular location is the extracellular space. It localises to the extracellular matrix. The protein resides in the extracellular vesicle. It is found in the endosome. The protein localises to the multivesicular body. APOE is an apolipoprotein, a protein associating with lipid particles, that mainly functions in lipoprotein-mediated lipid transport between organs via the plasma and interstitial fluids. APOE is a core component of plasma lipoproteins and is involved in their production, conversion and clearance. Apolipoproteins are amphipathic molecules that interact both with lipids of the lipoprotein particle core and the aqueous environment of the plasma. As such, APOE associates with chylomicrons, chylomicron remnants, very low density lipoproteins (VLDL) and intermediate density lipoproteins (IDL) but shows a preferential binding to high-density lipoproteins (HDL). It also binds a wide range of cellular receptors including the LDL receptor/LDLR, the LDL receptor-related proteins LRP1, LRP2 and LRP8 and the very low-density lipoprotein receptor/VLDLR that mediate the cellular uptake of the APOE-containing lipoprotein particles. Finally, APOE also has a heparin-binding activity and binds heparan-sulfate proteoglycans on the surface of cells, a property that supports the capture and the receptor-mediated uptake of APOE-containing lipoproteins by cells. A main function of APOE is to mediate lipoprotein clearance through the uptake of chylomicrons, VLDLs, and HDLs by hepatocytes. APOE is also involved in the biosynthesis by the liver of VLDLs as well as their uptake by peripheral tissues ensuring the delivery of triglycerides and energy storage in muscle, heart and adipose tissues. By participating in the lipoprotein-mediated distribution of lipids among tissues, APOE plays a critical role in plasma and tissues lipid homeostasis. APOE is also involved in two steps of reverse cholesterol transport, the HDLs-mediated transport of cholesterol from peripheral tissues to the liver, and thereby plays an important role in cholesterol homeostasis. First, it is functionally associated with ABCA1 in the biogenesis of HDLs in tissues. Second, it is enriched in circulating HDLs and mediates their uptake by hepatocytes. APOE also plays an important role in lipid transport in the central nervous system, regulating neuron survival and sprouting. The protein is Apolipoprotein E (APOE) of Cebus capucinus (White-faced sapajou).